We begin with the raw amino-acid sequence, 342 residues long: Isopentenyl-diphosphate delta-isomerase (342 aa).

Arg11–Lys12 lines the substrate pocket. Residues Ser68, Ser69–Thr71, Ser99, and Asn127 contribute to the FMN site. Ser99–Arg101 provides a ligand contact to substrate. Gln162 provides a ligand contact to substrate. Glu163 provides a ligand contact to Mg(2+). FMN is bound by residues Lys194, Thr224, Gly274–Lys276, and Ala295–Gly296.

The protein belongs to the IPP isomerase type 2 family. As to quaternary structure, homooctamer. Dimer of tetramers. It depends on FMN as a cofactor. The cofactor is NADPH. Mg(2+) serves as cofactor.

It is found in the cytoplasm. It catalyses the reaction isopentenyl diphosphate = dimethylallyl diphosphate. Its function is as follows. Involved in the biosynthesis of isoprenoids. Catalyzes the 1,3-allylic rearrangement of the homoallylic substrate isopentenyl (IPP) to its allylic isomer, dimethylallyl diphosphate (DMAPP). In Rickettsia conorii (strain ATCC VR-613 / Malish 7), this protein is Isopentenyl-diphosphate delta-isomerase.